A 475-amino-acid chain; its full sequence is L-ornithine N(5)-monooxygenase (475 aa).

FAD is bound by residues 65–73 and Gln-84; that span reads ERQPEFGWH. Substrate is bound at residue Lys-89. Val-150 lines the FAD pocket. An NADP(+)-binding site is contributed by 238–241; that stretch reads GGQS. Residues 277-280 and Asn-307 contribute to the substrate site; that span reads NEIF. 307-309 serves as a coordination point for NADP(+); it reads NYG. 446-448 contributes to the FAD binding site; the sequence is SLL. Substrate is bound at residue Ser-449.

It belongs to the lysine N(6)-hydroxylase/L-ornithine N(5)-oxygenase family. As to quaternary structure, homotetramer. FAD serves as cofactor.

The catalysed reaction is L-ornithine + NADPH + O2 = N(5)-hydroxy-L-ornithine + NADP(+) + H2O. The enzyme catalyses L-ornithine + NADH + O2 = N(5)-hydroxy-L-ornithine + NAD(+) + H2O. It functions in the pathway siderophore biosynthesis. Its function is as follows. L-ornithine N(5)-monooxygenase; part of the gene cluster that mediates the biosynthesis of hydroxamate-containing siderophores that play a critical role in virulence via intracellular iron acquisition during macrophage infection. SID1 catalyzes the conversion of L-ornithine to N(5)-hydroxyornithine, the first step in the biosynthesis of all hydroxamate-containing siderophores. The polypeptide is L-ornithine N(5)-monooxygenase (Ajellomyces capsulatus (Darling's disease fungus)).